Consider the following 138-residue polypeptide: Transcription antitermination protein NusB (138 aa).

This sequence belongs to the NusB family.

Its function is as follows. Involved in transcription antitermination. Required for transcription of ribosomal RNA (rRNA) genes. Binds specifically to the boxA antiterminator sequence of the ribosomal RNA (rrn) operons. The protein is Transcription antitermination protein NusB of Helicobacter acinonychis (strain Sheeba).